The chain runs to 145 residues: Large ribosomal subunit protein uL16 (145 aa).

It belongs to the universal ribosomal protein uL16 family. In terms of assembly, part of the 50S ribosomal subunit.

Binds 23S rRNA and is also seen to make contacts with the A and possibly P site tRNAs. The polypeptide is Large ribosomal subunit protein uL16 (Lactobacillus gasseri (strain ATCC 33323 / DSM 20243 / BCRC 14619 / CIP 102991 / JCM 1131 / KCTC 3163 / NCIMB 11718 / NCTC 13722 / AM63)).